We begin with the raw amino-acid sequence, 284 residues long: Small ribosomal subunit protein uS2 (284 aa).

Belongs to the universal ribosomal protein uS2 family.

In Mycoplasma genitalium (strain ATCC 33530 / DSM 19775 / NCTC 10195 / G37) (Mycoplasmoides genitalium), this protein is Small ribosomal subunit protein uS2 (rpsB).